We begin with the raw amino-acid sequence, 55 residues long: UPF0434 protein BARBAKC583_1098 (55 aa).

This sequence belongs to the UPF0434 family.

The polypeptide is UPF0434 protein BARBAKC583_1098 (Bartonella bacilliformis (strain ATCC 35685 / KC583 / Herrer 020/F12,63)).